The chain runs to 284 residues: MEMO1 family protein STK_20620 (284 aa).

The protein belongs to the MEMO1 family.

The protein is MEMO1 family protein STK_20620 of Sulfurisphaera tokodaii (strain DSM 16993 / JCM 10545 / NBRC 100140 / 7) (Sulfolobus tokodaii).